A 178-amino-acid chain; its full sequence is PRA1 family protein 2 (178 aa).

The Cytoplasmic segment spans residues 1–41 (MSEVRLPPLRALDDFVLGSARLAAPDPCDPQRWCHRVINNL). A helical membrane pass occupies residues 42-62 (LYYQTNYLLCFGIGLALAGYV). The Extracellular portion of the chain corresponds to 63-64 (RP). A helical membrane pass occupies residues 65 to 85 (LHTLLSALVVAVALGMLVWAA). At 86 to 96 (ETRAAVRRCRR) the chain is on the cytoplasmic side. The chain crosses the membrane as a helical span at residues 97-119 (SHPAACLAAVLAVGLLVLWVVGG). The Extracellular segment spans residues 120–122 (ACT). The chain crosses the membrane as a helical span at residues 123-140 (FLLSIAGPVLLILVHASL). The Cytoplasmic segment spans residues 141–178 (RLRNLKNKIENKIESIGLKRTPMGLLLEALGQEQEAGS).

Belongs to the PRA1 family. Interacts with CCR5 and GDE1.

The protein localises to the endosome membrane. In terms of biological role, may be involved in ER/Golgi transport and vesicular traffic. Plays a proapoptotic role in cerulenin-induced neuroblastoma apoptosis. The protein is PRA1 family protein 2 (PRAF2) of Macaca fascicularis (Crab-eating macaque).